A 135-amino-acid chain; its full sequence is Phosphoribosyl-AMP cyclohydrolase (135 aa).

Asp78 contributes to the Mg(2+) binding site. Zn(2+) is bound at residue Cys79. 2 residues coordinate Mg(2+): Asp80 and Asp82. 2 residues coordinate Zn(2+): Cys96 and Cys103.

This sequence belongs to the PRA-CH family. Homodimer. The cofactor is Mg(2+). It depends on Zn(2+) as a cofactor.

The protein resides in the cytoplasm. It carries out the reaction 1-(5-phospho-beta-D-ribosyl)-5'-AMP + H2O = 1-(5-phospho-beta-D-ribosyl)-5-[(5-phospho-beta-D-ribosylamino)methylideneamino]imidazole-4-carboxamide. Its pathway is amino-acid biosynthesis; L-histidine biosynthesis; L-histidine from 5-phospho-alpha-D-ribose 1-diphosphate: step 3/9. Catalyzes the hydrolysis of the adenine ring of phosphoribosyl-AMP. The sequence is that of Phosphoribosyl-AMP cyclohydrolase from Cupriavidus metallidurans (strain ATCC 43123 / DSM 2839 / NBRC 102507 / CH34) (Ralstonia metallidurans).